The following is a 104-amino-acid chain: L-rhamnose mutarotase (104 aa).

Tyrosine 18 provides a ligand contact to substrate. The active-site Proton donor is histidine 22. Residues tyrosine 41 and tryptophan 76–tryptophan 77 contribute to the substrate site.

This sequence belongs to the rhamnose mutarotase family. As to quaternary structure, homodimer.

The protein localises to the cytoplasm. It catalyses the reaction alpha-L-rhamnose = beta-L-rhamnose. It functions in the pathway carbohydrate metabolism; L-rhamnose metabolism. Its function is as follows. Involved in the anomeric conversion of L-rhamnose. The sequence is that of L-rhamnose mutarotase from Klebsiella pneumoniae (strain 342).